The sequence spans 272 residues: Probable feruloyl esterase C (272 aa).

The N-terminal stretch at 1 to 22 (MLPTILYSAILALSALTPSALA) is a signal peptide.

The protein belongs to the faeC family.

The protein resides in the secreted. It catalyses the reaction feruloyl-polysaccharide + H2O = ferulate + polysaccharide.. Its function is as follows. Involved in degradation of plant cell walls. Hydrolyzes the feruloyl-arabinose ester bond in arabinoxylans, and the feruloyl-galactose ester bond in pectin. Active against paranitrophenyl-acetate, methyl ferulate and wheat arabinoxylan. This is Probable feruloyl esterase C (faeC-1) from Aspergillus clavatus (strain ATCC 1007 / CBS 513.65 / DSM 816 / NCTC 3887 / NRRL 1 / QM 1276 / 107).